The chain runs to 857 residues: Median body protein (857 aa).

Coiled coils occupy residues 169–546 and 571–793; these read HNAL…MRTE and LAHL…TKAM.

Its subcellular location is the cytoplasm. The protein localises to the cytoskeleton. Functionally, structural component of the ventral disk involved in maintanance of a domed conformation of the disk required for proper attachment. May have a role in immobilizing the microtubules between cell divisions. The chain is Median body protein from Giardia intestinalis (strain ATCC 50803 / WB clone C6) (Giardia lamblia).